The sequence spans 223 residues: Ribose-5-phosphate isomerase A (223 aa).

Residues 28–31 (TGST), 81–84 (DGTD), and 94–97 (KGGG) each bind substrate. The active-site Proton acceptor is Glu103. Lys121 is a substrate binding site.

This sequence belongs to the ribose 5-phosphate isomerase family. In terms of assembly, homodimer.

It carries out the reaction aldehydo-D-ribose 5-phosphate = D-ribulose 5-phosphate. Its pathway is carbohydrate degradation; pentose phosphate pathway; D-ribose 5-phosphate from D-ribulose 5-phosphate (non-oxidative stage): step 1/1. Functionally, catalyzes the reversible conversion of ribose-5-phosphate to ribulose 5-phosphate. The polypeptide is Ribose-5-phosphate isomerase A (Baumannia cicadellinicola subsp. Homalodisca coagulata).